The sequence spans 38 residues: Potassium channel toxin alpha-KTx 3.12 (38 aa).

3 cysteine pairs are disulfide-bonded: Cys-8–Cys-28, Cys-14–Cys-33, and Cys-18–Cys-35. A Lysine amide modification is found at Lys-38.

This sequence belongs to the short scorpion toxin superfamily. Potassium channel inhibitor family. Alpha-KTx 03 subfamily. As to expression, expressed by the venom gland.

The protein resides in the secreted. Functionally, potent inhibitor of voltage-dependent potassium channels, with a preference for Kv1.3/KCNA3 versus Kv1.2/KCNA2. This Androctonus amoreuxi (African fattail scorpion) protein is Potassium channel toxin alpha-KTx 3.12.